Consider the following 419-residue polypeptide: GTPase Obg (419 aa).

Residues 1 to 156 (MFIDKVNTYL…AEVNLELRLI (156 aa)) enclose the Obg domain. In terms of domain architecture, OBG-type G spans 157-325 (ADVGLLGLPN…LLKEMLRMLE (169 aa)). GTP-binding positions include 163 to 170 (GLPNAGKS), 188 to 192 (FTTLA), 209 to 212 (DIPG), 279 to 282 (NKID), and 306 to 308 (SAA). Mg(2+) contacts are provided by Ser170 and Thr190. Residues 342–419 (KKYIYEPEFK…IGDFEFTFEK (78 aa)) enclose the OCT domain.

This sequence belongs to the TRAFAC class OBG-HflX-like GTPase superfamily. OBG GTPase family. In terms of assembly, monomer. Mg(2+) serves as cofactor.

The protein resides in the cytoplasm. In terms of biological role, an essential GTPase which binds GTP, GDP and possibly (p)ppGpp with moderate affinity, with high nucleotide exchange rates and a fairly low GTP hydrolysis rate. Plays a role in control of the cell cycle, stress response, ribosome biogenesis and in those bacteria that undergo differentiation, in morphogenesis control. The polypeptide is GTPase Obg (Endomicrobium trichonymphae).